Consider the following 251-residue polypeptide: 4-hydroxy-tetrahydrodipicolinate reductase (251 aa).

NAD(+)-binding positions include 9 to 14, 85 to 87, and 109 to 112; these read GCNGKM, ATT, and SANM. Catalysis depends on histidine 141, which acts as the Proton donor/acceptor. A (S)-2,3,4,5-tetrahydrodipicolinate-binding site is contributed by histidine 142. The active-site Proton donor is the lysine 145. 151–152 is a (S)-2,3,4,5-tetrahydrodipicolinate binding site; it reads GT.

The protein belongs to the DapB family.

The protein localises to the cytoplasm. The enzyme catalyses (S)-2,3,4,5-tetrahydrodipicolinate + NAD(+) + H2O = (2S,4S)-4-hydroxy-2,3,4,5-tetrahydrodipicolinate + NADH + H(+). The catalysed reaction is (S)-2,3,4,5-tetrahydrodipicolinate + NADP(+) + H2O = (2S,4S)-4-hydroxy-2,3,4,5-tetrahydrodipicolinate + NADPH + H(+). The protein operates within amino-acid biosynthesis; L-lysine biosynthesis via DAP pathway; (S)-tetrahydrodipicolinate from L-aspartate: step 4/4. Its function is as follows. Catalyzes the conversion of 4-hydroxy-tetrahydrodipicolinate (HTPA) to tetrahydrodipicolinate. This Caldanaerobacter subterraneus subsp. tengcongensis (strain DSM 15242 / JCM 11007 / NBRC 100824 / MB4) (Thermoanaerobacter tengcongensis) protein is 4-hydroxy-tetrahydrodipicolinate reductase.